We begin with the raw amino-acid sequence, 186 residues long: Peptidyl-tRNA hydrolase (186 aa).

Position 16 (Tyr16) interacts with tRNA. His21 functions as the Proton acceptor in the catalytic mechanism. The tRNA site is built by Tyr60 and Asn62.

It belongs to the PTH family. In terms of assembly, monomer.

The protein localises to the cytoplasm. The catalysed reaction is an N-acyl-L-alpha-aminoacyl-tRNA + H2O = an N-acyl-L-amino acid + a tRNA + H(+). Its function is as follows. Hydrolyzes ribosome-free peptidyl-tRNAs (with 1 or more amino acids incorporated), which drop off the ribosome during protein synthesis, or as a result of ribosome stalling. In terms of biological role, catalyzes the release of premature peptidyl moieties from peptidyl-tRNA molecules trapped in stalled 50S ribosomal subunits, and thus maintains levels of free tRNAs and 50S ribosomes. This is Peptidyl-tRNA hydrolase from Tropheryma whipplei (strain TW08/27) (Whipple's bacillus).